Reading from the N-terminus, the 143-residue chain is Large ribosomal subunit protein uL11 (143 aa).

It belongs to the universal ribosomal protein uL11 family. As to quaternary structure, part of the ribosomal stalk of the 50S ribosomal subunit. Interacts with L10 and the large rRNA to form the base of the stalk. L10 forms an elongated spine to which L12 dimers bind in a sequential fashion forming a multimeric L10(L12)X complex. One or more lysine residues are methylated.

Functionally, forms part of the ribosomal stalk which helps the ribosome interact with GTP-bound translation factors. This chain is Large ribosomal subunit protein uL11, found in Ectopseudomonas mendocina (strain ymp) (Pseudomonas mendocina).